Consider the following 372-residue polypeptide: NADH-quinone oxidoreductase subunit D (372 aa).

The protein belongs to the complex I 49 kDa subunit family. As to quaternary structure, NDH-1 is composed of 14 different subunits. Subunits NuoB, C, D, E, F, and G constitute the peripheral sector of the complex.

It localises to the cell inner membrane. The enzyme catalyses a quinone + NADH + 5 H(+)(in) = a quinol + NAD(+) + 4 H(+)(out). NDH-1 shuttles electrons from NADH, via FMN and iron-sulfur (Fe-S) centers, to quinones in the respiratory chain. The immediate electron acceptor for the enzyme in this species is believed to be ubiquinone. Couples the redox reaction to proton translocation (for every two electrons transferred, four hydrogen ions are translocated across the cytoplasmic membrane), and thus conserves the redox energy in a proton gradient. This is NADH-quinone oxidoreductase subunit D from Desulfotalea psychrophila (strain LSv54 / DSM 12343).